Here is a 288-residue protein sequence, read N- to C-terminus: L-xylulose reductase (288 aa).

NADP(+)-binding residues include Ile-39, Asn-113, and Lys-147. Residue Ser-181 is the Proton donor of the active site. NADP(+)-binding residues include Tyr-196, Lys-200, Ile-228, and Thr-230. The active-site Proton acceptor is the Tyr-196. Lys-200 functions as the Lowers pKa of active site Tyr in the catalytic mechanism.

This sequence belongs to the short-chain dehydrogenases/reductases (SDR) family.

The enzyme catalyses xylitol + NADP(+) = L-xylulose + NADPH + H(+). It functions in the pathway carbohydrate degradation; L-arabinose degradation via L-arabinitol; D-xylulose 5-phosphate from L-arabinose (fungal route): step 3/5. Functionally, L-xylulose reductase involved in the catabolism of L-arabinose through an oxidoreductive pathway. Catalyzes the NADPH-dependent reduction of L-xylulose. Is also able to convert D-xylulose, D-ribulose, L-sorbose, and D-fructose to their corresponding polyols. This Hypocrea jecorina (strain QM6a) (Trichoderma reesei) protein is L-xylulose reductase.